We begin with the raw amino-acid sequence, 216 residues long: Dimethylamine corrinoid protein 2 (216 aa).

The B12-binding N-terminal domain maps to 1-91 (MASKEELLQE…EMPAGTETKK (91 aa)). The region spanning 92-216 (LGVIVNGTVE…AKAKELLLGK (125 aa)) is the B12-binding domain. Histidine 105 lines the methylcob(III)alamin pocket.

It belongs to the methylamine corrinoid protein family.

Its pathway is one-carbon metabolism; methanogenesis from dimethylamine. In terms of biological role, acts as a methyl group carrier between MtbB and MtbA. The protein is Dimethylamine corrinoid protein 2 (mtbC2) of Methanosarcina acetivorans (strain ATCC 35395 / DSM 2834 / JCM 12185 / C2A).